Reading from the N-terminus, the 253-residue chain is Small ribosomal subunit protein uS3 (253 aa).

The 72-residue stretch at 21 to 92 (LNEFLTRELA…SVELYAEKVA (72 aa)) folds into the KH type-2 domain. The tract at residues 211–253 (VEPKDEILPTTPISEQKGGKPDPQVPQQPPQQPPAMPPPVPTA) is disordered. The segment covering 233–253 (PQVPQQPPQQPPAMPPPVPTA) has biased composition (pro residues).

This sequence belongs to the universal ribosomal protein uS3 family.

The protein resides in the cytoplasm. It is found in the nucleus. The protein localises to the nucleolus. It localises to the mitochondrion inner membrane. Its subcellular location is the cytoskeleton. The protein resides in the spindle. The catalysed reaction is 2'-deoxyribonucleotide-(2'-deoxyribose 5'-phosphate)-2'-deoxyribonucleotide-DNA = a 3'-end 2'-deoxyribonucleotide-(2,3-dehydro-2,3-deoxyribose 5'-phosphate)-DNA + a 5'-end 5'-phospho-2'-deoxyribonucleoside-DNA + H(+). Component of the small ribosomal subunit. The ribosome is a large ribonucleoprotein complex responsible for the synthesis of proteins in the cell. Has endonuclease activity and plays a role in repair of damaged DNA. Also involved in other processes including regulation of transcription, translation of its cognate mRNA, spindle formation and chromosome movement during mitosis, and apoptosis. The polypeptide is Small ribosomal subunit protein uS3 (RPS3) (Ambystoma mexicanum (Axolotl)).